A 397-amino-acid polypeptide reads, in one-letter code: Purine ribonucleoside efflux pump NepI (397 aa).

Residues 1-21 are Cytoplasmic-facing; sequence MNENIAEKFRADGVARPNWSA. The chain crosses the membrane as a helical span at residues 22–42; the sequence is VFAVAFCVACLITVEFLPVSL. The Periplasmic segment spans residues 43-54; it reads LTPMAQDLGISE. The chain crosses the membrane as a helical span at residues 55–75; sequence GVAGQSVTVTAFVAMFSSLFI. Residues 76-85 lie on the Cytoplasmic side of the membrane; sequence TQIIQATDRR. Residues 86–106 traverse the membrane as a helical segment; that stretch reads YIVILFAVLLTASCLMVSFAN. A topological domain (periplasmic) is located at residue Ser-107. The helical transmembrane segment at 108–128 threads the bilayer; sequence FTLLLLGRACLGLALGGFWAM. The Cytoplasmic segment spans residues 129–147; the sequence is SASLTMRLVPARTVPKALS. Residues 148–168 form a helical membrane-spanning segment; sequence VIFGAVSIALVIAAPLGSFLG. Topologically, residues 169 to 175 are periplasmic; that stretch reads GIIGWRN. Residues 176 to 196 form a helical membrane-spanning segment; that stretch reads VFNAAAVMGVLCVIWVVKSLP. Topologically, residues 197–215 are cytoplasmic; sequence SLPGEPSHQKQNMFSLLQR. A helical transmembrane segment spans residues 216–236; the sequence is PGVMAGMIAIFMSFAGQFAFF. The Periplasmic segment spans residues 237 to 255; it reads TYIRPVYMNLAGFDVDGLT. A helical transmembrane segment spans residues 256-276; the sequence is LVLLSFGIASFVGTSFSSYVL. Residues 277–281 lie on the Cytoplasmic side of the membrane; that stretch reads KRSVK. The helical transmembrane segment at 282-302 threads the bilayer; sequence LALAGAPLLLALSALTLIVWG. Topologically, residues 303-305 are periplasmic; the sequence is SDK. A helical transmembrane segment spans residues 306–326; sequence TVAAAIAIIWGLAFALVPVGW. Residues 327 to 343 are Cytoplasmic-facing; it reads STWITRSLADQAEKAGS. A helical transmembrane segment spans residues 344-364; the sequence is IQVAVIQLANTCGAAVGGYAL. Residues 365–366 lie on the Periplasmic side of the membrane; that stretch reads DN. Residues 367 to 387 traverse the membrane as a helical segment; it reads FGLLSPLALSGGLMLLTALVV. At 388–397 the chain is on the cytoplasmic side; sequence AAKVRITPMS.

It belongs to the major facilitator superfamily. DHA1 family. NepI (TC 2.A.1.2.26) subfamily.

The protein localises to the cell inner membrane. The catalysed reaction is inosine(in) + H(+)(out) = inosine(out) + H(+)(in). It carries out the reaction guanosine(in) + H(+)(out) = guanosine(out) + H(+)(in). Functionally, involved in the efflux of purine ribonucleosides, such as inosine and guanosine. This Salmonella choleraesuis (strain SC-B67) protein is Purine ribonucleoside efflux pump NepI.